The sequence spans 347 residues: 5-deoxyribose 1-phosphate isomerase (347 aa).

Residues 48–50, Arg91, and Gln198 each bind substrate; that span reads RGA. Catalysis depends on Asp239, which acts as the Proton donor. 249 to 250 contributes to the substrate binding site; it reads NK.

It belongs to the EIF-2B alpha/beta/delta subunits family. DrdI subfamily.

It catalyses the reaction 5-deoxy-alpha-D-ribose 1-phosphate = 5-deoxy-D-ribulose 1-phosphate. Its pathway is carbohydrate degradation. Functionally, catalyzes the isomerization of 5-deoxy-alpha-D-ribose 1-phosphate to 5-deoxy-D-ribulose 1-phosphate, as part of a 5-deoxyribose salvage pathway that recycles this toxic radical SAM enzyme by-product to mainstream metabolites. In Bacillus thuringiensis subsp. konkukian (strain 97-27), this protein is 5-deoxyribose 1-phosphate isomerase.